Here is a 207-residue protein sequence, read N- to C-terminus: Thiamine-phosphate synthase (207 aa).

4-amino-2-methyl-5-(diphosphooxymethyl)pyrimidine is bound by residues 35-39 and Asn-67; that span reads QYRDK. Residues Asp-68 and Asp-86 each coordinate Mg(2+). Thr-105 lines the 4-amino-2-methyl-5-(diphosphooxymethyl)pyrimidine pocket. 132–134 contributes to the 2-[(2R,5Z)-2-carboxy-4-methylthiazol-5(2H)-ylidene]ethyl phosphate binding site; the sequence is SNT. 4-amino-2-methyl-5-(diphosphooxymethyl)pyrimidine is bound at residue Lys-135. Gly-162 provides a ligand contact to 2-[(2R,5Z)-2-carboxy-4-methylthiazol-5(2H)-ylidene]ethyl phosphate.

This sequence belongs to the thiamine-phosphate synthase family. The cofactor is Mg(2+).

It carries out the reaction 2-[(2R,5Z)-2-carboxy-4-methylthiazol-5(2H)-ylidene]ethyl phosphate + 4-amino-2-methyl-5-(diphosphooxymethyl)pyrimidine + 2 H(+) = thiamine phosphate + CO2 + diphosphate. The catalysed reaction is 2-(2-carboxy-4-methylthiazol-5-yl)ethyl phosphate + 4-amino-2-methyl-5-(diphosphooxymethyl)pyrimidine + 2 H(+) = thiamine phosphate + CO2 + diphosphate. The enzyme catalyses 4-methyl-5-(2-phosphooxyethyl)-thiazole + 4-amino-2-methyl-5-(diphosphooxymethyl)pyrimidine + H(+) = thiamine phosphate + diphosphate. It participates in cofactor biosynthesis; thiamine diphosphate biosynthesis; thiamine phosphate from 4-amino-2-methyl-5-diphosphomethylpyrimidine and 4-methyl-5-(2-phosphoethyl)-thiazole: step 1/1. Condenses 4-methyl-5-(beta-hydroxyethyl)thiazole monophosphate (THZ-P) and 2-methyl-4-amino-5-hydroxymethyl pyrimidine pyrophosphate (HMP-PP) to form thiamine monophosphate (TMP). The chain is Thiamine-phosphate synthase from Pseudomonas fluorescens (strain Pf0-1).